Here is a 214-residue protein sequence, read N- to C-terminus: Adenylate kinase (214 aa).

Residue 10–15 (GAGKGT) coordinates ATP. An NMP region spans residues 30–59 (STGDMLRAAVKAGTELGKQAKEIMDAGKLV). AMP is bound by residues threonine 31, arginine 36, 57–59 (KLV), 85–88 (GFPR), and glutamine 92. Residues 122–159 (GRRVHAASGRVYHVKFNPPKVEDKDDVTGEDLSVRKDD) form an LID region. Residues arginine 123 and 132 to 133 (VY) each bind ATP. AMP-binding residues include arginine 156 and arginine 167. Arginine 200 contacts ATP.

This sequence belongs to the adenylate kinase family. Monomer.

The protein localises to the cytoplasm. The catalysed reaction is AMP + ATP = 2 ADP. It functions in the pathway purine metabolism; AMP biosynthesis via salvage pathway; AMP from ADP: step 1/1. Catalyzes the reversible transfer of the terminal phosphate group between ATP and AMP. Plays an important role in cellular energy homeostasis and in adenine nucleotide metabolism. The polypeptide is Adenylate kinase (Pectobacterium atrosepticum (strain SCRI 1043 / ATCC BAA-672) (Erwinia carotovora subsp. atroseptica)).